A 472-amino-acid polypeptide reads, in one-letter code: Adenosylhomocysteinase (472 aa).

The substrate site is built by Thr61, Asp136, and Glu196. 197–199 (TTT) lines the NAD(+) pocket. Substrate contacts are provided by Lys226 and Asp230. NAD(+)-binding positions include Asn231, 260-265 (GYGDVG), Glu283, Asn318, 339-341 (IGH), and Asn384.

It belongs to the adenosylhomocysteinase family. It depends on NAD(+) as a cofactor.

The protein localises to the cytoplasm. The catalysed reaction is S-adenosyl-L-homocysteine + H2O = L-homocysteine + adenosine. It functions in the pathway amino-acid biosynthesis; L-homocysteine biosynthesis; L-homocysteine from S-adenosyl-L-homocysteine: step 1/1. Its function is as follows. May play a key role in the regulation of the intracellular concentration of adenosylhomocysteine. In Cupriavidus pinatubonensis (strain JMP 134 / LMG 1197) (Cupriavidus necator (strain JMP 134)), this protein is Adenosylhomocysteinase.